The sequence spans 423 residues: Histidine--tRNA ligase (423 aa).

The protein belongs to the class-II aminoacyl-tRNA synthetase family. As to quaternary structure, homodimer.

The protein localises to the cytoplasm. It catalyses the reaction tRNA(His) + L-histidine + ATP = L-histidyl-tRNA(His) + AMP + diphosphate + H(+). The polypeptide is Histidine--tRNA ligase (Haemophilus influenzae (strain 86-028NP)).